We begin with the raw amino-acid sequence, 456 residues long: Short chain dehydrogenase tazN (456 aa).

Residues V45, D99, N126, R160, Y195, K199, and T229 each coordinate NADP(+). Catalysis depends on Y195, which acts as the Proton donor. K199 acts as the Lowers pKa of active site Tyr in catalysis.

This sequence belongs to the short-chain dehydrogenases/reductases (SDR) family.

The protein operates within secondary metabolite biosynthesis. Functionally, short chain dehydrogenase; part of the gene cluster that mediates the biosynthesis of azaterrilone A and other azaphilones, a class of fungal metabolites characterized by a highly oxygenated pyrano-quinone bicyclic core and exhibiting a broad range of bioactivities. The first step of the pathway begins with the non-reducing polyketide synthase tazA that assembles one acetyl-CoA starter unit, five malonyl-CoA units, and catalyzes a series of Claisen condensations, methylation, PT-mediated cyclization, and finally releases the first hexaketide precursor through the R-domain. The tazA product then undergoes reduction on its terminal ketone and the following pyran-ring formation by yet undetermined enzyme(s). Dehydration and enoyl reduction, possibly involving the trans-enoyl reductase tazE leads to the next intermediate. TazD is predicted as an acetyltransferase and might catalyze the acetylation steps leading to the synthesis of azaterrilone A. Azaterrilone A is not the final product of the taz pathway and both the highly reducing polyketide synthase tazB and the dual enzyme tazHJ catalyze late steps of the pathway, leading to the production of the 2 final stereoisomers that contain additional polyketide modification whose structures have still to be determined. The chain is Short chain dehydrogenase tazN from Aspergillus terreus (strain NIH 2624 / FGSC A1156).